The chain runs to 270 residues: 4-hydroxy-tetrahydrodipicolinate reductase (270 aa).

Residues 11 to 16 (GASGRM) and glutamate 37 each bind NAD(+). Arginine 38 contacts NADP(+). NAD(+) is bound by residues 101-103 (GTT) and 125-128 (APNM). Residue histidine 158 is the Proton donor/acceptor of the active site. Histidine 159 lines the (S)-2,3,4,5-tetrahydrodipicolinate pocket. Lysine 162 (proton donor) is an active-site residue. 168–169 (GT) provides a ligand contact to (S)-2,3,4,5-tetrahydrodipicolinate.

The protein belongs to the DapB family.

It is found in the cytoplasm. The catalysed reaction is (S)-2,3,4,5-tetrahydrodipicolinate + NAD(+) + H2O = (2S,4S)-4-hydroxy-2,3,4,5-tetrahydrodipicolinate + NADH + H(+). It carries out the reaction (S)-2,3,4,5-tetrahydrodipicolinate + NADP(+) + H2O = (2S,4S)-4-hydroxy-2,3,4,5-tetrahydrodipicolinate + NADPH + H(+). It functions in the pathway amino-acid biosynthesis; L-lysine biosynthesis via DAP pathway; (S)-tetrahydrodipicolinate from L-aspartate: step 4/4. Its function is as follows. Catalyzes the conversion of 4-hydroxy-tetrahydrodipicolinate (HTPA) to tetrahydrodipicolinate. In Shewanella amazonensis (strain ATCC BAA-1098 / SB2B), this protein is 4-hydroxy-tetrahydrodipicolinate reductase.